The following is a 138-amino-acid chain: Large ribosomal subunit protein uL16 (138 aa).

The protein belongs to the universal ribosomal protein uL16 family. In terms of assembly, part of the 50S ribosomal subunit.

Binds 23S rRNA and is also seen to make contacts with the A and possibly P site tRNAs. The sequence is that of Large ribosomal subunit protein uL16 from Hyphomonas neptunium (strain ATCC 15444).